The chain runs to 115 residues: Hydrogenase maturation factor HypA (115 aa).

A Ni(2+)-binding site is contributed by histidine 2. Residues cysteine 73, cysteine 76, cysteine 89, and cysteine 92 each coordinate Zn(2+).

The protein belongs to the HypA/HybF family.

In terms of biological role, involved in the maturation of [NiFe] hydrogenases. Required for nickel insertion into the metal center of the hydrogenase. The protein is Hydrogenase maturation factor HypA of Aquifex aeolicus (strain VF5).